The primary structure comprises 203 residues: Thymidylate kinase (203 aa).

An ATP-binding site is contributed by 14-21 (GGEGIGKS).

It belongs to the thymidylate kinase family.

The catalysed reaction is dTMP + ATP = dTDP + ADP. In terms of biological role, phosphorylation of dTMP to form dTDP in both de novo and salvage pathways of dTTP synthesis. The protein is Thymidylate kinase of Rickettsia rickettsii (strain Iowa).